Reading from the N-terminus, the 243-residue chain is Orotidine 5'-phosphate decarboxylase (243 aa).

Substrate is bound by residues aspartate 19, lysine 41, 69-78, threonine 124, arginine 185, glutamine 194, glycine 214, and arginine 215; that span reads DLKFFDIPAT. The active-site Proton donor is lysine 71.

It belongs to the OMP decarboxylase family. Type 1 subfamily. As to quaternary structure, homodimer.

The enzyme catalyses orotidine 5'-phosphate + H(+) = UMP + CO2. Its pathway is pyrimidine metabolism; UMP biosynthesis via de novo pathway; UMP from orotate: step 2/2. In terms of biological role, catalyzes the decarboxylation of orotidine 5'-monophosphate (OMP) to uridine 5'-monophosphate (UMP). In Xanthomonas campestris pv. campestris (strain 8004), this protein is Orotidine 5'-phosphate decarboxylase.